The sequence spans 98 residues: Biogenesis of lysosome-related organelles complex 1 subunit SNN1 (98 aa).

Residues 55-98 are a coiled coil; it reads MDEQELLQEEGSLKEELARVNQLKKRLDKLTELYAELARKCGAL.

This sequence belongs to the SNAPIN family. Component of the biogenesis of lysosome-related organelles complex-1 (BLOC-1).

The protein resides in the endosome. Component of the biogenesis of lysosome-related organelles complex-1 (BLOC-1), a complex involved in endosomal cargo sorting. The chain is Biogenesis of lysosome-related organelles complex 1 subunit SNN1 (SNN1) from Eremothecium gossypii (strain ATCC 10895 / CBS 109.51 / FGSC 9923 / NRRL Y-1056) (Yeast).